Reading from the N-terminus, the 106-residue chain is Large ribosomal subunit protein cL38 (106 aa).

A chloroplast-targeting transit peptide spans 1–39 (MSVSAIFGTGIVTVAASPVLRQFQVPKLGNGGGLGMVIE). Positions 42 to 70 (SRPQKKSTAHHRKTRPKKTQPWDIKRKPT) are disordered. Positions 44–59 (PQKKSTAHHRKTRPKK) are enriched in basic residues.

The protein belongs to the chloroplast-specific ribosomal protein cL38 family. In terms of assembly, part of the 50S ribosomal subunit.

It is found in the plastid. The protein resides in the chloroplast. In Arabidopsis thaliana (Mouse-ear cress), this protein is Large ribosomal subunit protein cL38 (PSRP6).